We begin with the raw amino-acid sequence, 457 residues long: Multidrug resistance protein MdtK (457 aa).

The next 12 helical transmembrane spans lie at 11-31 (LLALAIPVIIAQIAQTAMGFV), 53-73 (IWLPTILFGHGLLLALTPVIA), 93-113 (WLVAGLSVLIIAVLYNAGHII), 127-147 (AIGYLHAIMWGAPGYLCFQVL), 160-180 (GMVIGFIGLLINIPVNYIFIY), 188-208 (LGGVGCGVATASVYWIMYLLM), 239-259 (IAIGMPIALALFFEVTLFAVV), 277-297 (ALNFSSLMFVLPMSLGVAATI), 316-336 (RTAIAVGMAMATCTAIFTIVL), 357-377 (LMLLAALYQISDSVQVIGSGV), 387-407 (IFFITFIAYWLLGLPTGYLLA), and 418-438 (PSGFWIGFIIGLTSAAIMMAL).

Belongs to the multi antimicrobial extrusion (MATE) (TC 2.A.66.1) family. MdtK subfamily.

It localises to the cell inner membrane. Functionally, multidrug efflux pump that functions probably as a Na(+)/drug antiporter. This Edwardsiella ictaluri (strain 93-146) protein is Multidrug resistance protein MdtK.